We begin with the raw amino-acid sequence, 367 residues long: uncharacterized protein (367 aa).

Helical transmembrane passes span 18–38 (ILAL…GILG), 239–259 (VSYF…IGIG), 296–316 (ILGV…GYLI), and 329–349 (AIFY…ISAL).

The protein belongs to the ABC-4 integral membrane protein family.

The protein resides in the cell membrane. This is an uncharacterized protein from Methanocaldococcus jannaschii (strain ATCC 43067 / DSM 2661 / JAL-1 / JCM 10045 / NBRC 100440) (Methanococcus jannaschii).